The primary structure comprises 282 residues: Acetyl-coenzyme A carboxylase carboxyl transferase subunit beta 1 (282 aa).

The region spanning 23 to 282 (LMTKCPECRH…MHTKGGVQHV (260 aa)) is the CoA carboxyltransferase N-terminal domain. Residues C27, C30, C46, and C49 each coordinate Zn(2+). A C4-type zinc finger spans residues 27 to 49 (CPECRHILLTKELEKNHKVCTKC).

Belongs to the AccD/PCCB family. In terms of assembly, acetyl-CoA carboxylase is a heterohexamer composed of biotin carboxyl carrier protein (AccB), biotin carboxylase (AccC) and two subunits each of ACCase subunit alpha (AccA) and ACCase subunit beta (AccD). Zn(2+) serves as cofactor.

It localises to the cytoplasm. The catalysed reaction is N(6)-carboxybiotinyl-L-lysyl-[protein] + acetyl-CoA = N(6)-biotinyl-L-lysyl-[protein] + malonyl-CoA. It participates in lipid metabolism; malonyl-CoA biosynthesis; malonyl-CoA from acetyl-CoA: step 1/1. Its function is as follows. Component of the acetyl coenzyme A carboxylase (ACC) complex. Biotin carboxylase (BC) catalyzes the carboxylation of biotin on its carrier protein (BCCP) and then the CO(2) group is transferred by the transcarboxylase to acetyl-CoA to form malonyl-CoA. The polypeptide is Acetyl-coenzyme A carboxylase carboxyl transferase subunit beta 1 (Lysinibacillus sphaericus (strain C3-41)).